We begin with the raw amino-acid sequence, 343 residues long: Signal peptide peptidase 1 (343 aa).

Over methionine 1–proline 19 the chain is Lumenal. The helical transmembrane segment at leucine 20–valine 40 threads the bilayer. Topologically, residues glycine 41–arginine 62 are cytoplasmic. A helical transmembrane segment spans residues phenylalanine 63–lysine 83. At aspartate 84 to asparagine 87 the chain is on the lumenal side. A helical membrane pass occupies residues alanine 88 to proline 108. At serine 109–glutamate 136 the chain is on the cytoplasmic side. A helical membrane pass occupies residues phenylalanine 137–alanine 157. Residues lysine 158–histidine 160 lie on the Lumenal side of the membrane. A helical membrane pass occupies residues tryptophan 161–leucine 181. The Cytoplasmic segment spans residues glycine 182–alanine 188. A helical transmembrane segment spans residues isoleucine 189–valine 209. Aspartate 198 is a catalytic residue. Topologically, residues serine 210–arginine 230 are lumenal. The helical transmembrane segment at proline 231–leucine 251 threads the bilayer. The active site involves aspartate 239. At arginine 252–serine 266 the chain is on the cytoplasmic side. Residues alanine 267–alanine 287 form a helical membrane-spanning segment. Residues alanine 288 to proline 290 are Lumenal-facing. The PAL signature appears at proline 290–leucine 292. The helical transmembrane segment at alanine 291 to glycine 311 threads the bilayer. Residues glutamate 312–glutamate 343 are Cytoplasmic-facing. The disordered stretch occupies residues serine 322–glutamate 343. Over residues alanine 324 to threonine 334 the composition is skewed to acidic residues. The Endoplasmic reticulum targeting signal signature appears at lysine 340 to glutamate 343.

The protein belongs to the peptidase A22B family. As to expression, ubiquitous.

It localises to the endoplasmic reticulum membrane. In terms of biological role, intramembrane-cleaving aspartic protease (I-CLiP) that cleaves type II membrane signal peptides in the hydrophobic plane of the membrane. Catalyzes intramembrane proteolysis of some signal peptides after they have been cleaved from a preprotein, resulting in the release of the fragment from the ER membrane into the cytoplasm. This chain is Signal peptide peptidase 1 (SPP1), found in Oryza sativa subsp. japonica (Rice).